Consider the following 113-residue polypeptide: Ribonuclease P protein component (113 aa).

Belongs to the RnpA family. In terms of assembly, consists of a catalytic RNA component (M1 or rnpB) and a protein subunit.

It catalyses the reaction Endonucleolytic cleavage of RNA, removing 5'-extranucleotides from tRNA precursor.. In terms of biological role, RNaseP catalyzes the removal of the 5'-leader sequence from pre-tRNA to produce the mature 5'-terminus. It can also cleave other RNA substrates such as 4.5S RNA. The protein component plays an auxiliary but essential role in vivo by binding to the 5'-leader sequence and broadening the substrate specificity of the ribozyme. This Finegoldia magna (strain ATCC 29328 / DSM 20472 / WAL 2508) (Peptostreptococcus magnus) protein is Ribonuclease P protein component.